Reading from the N-terminus, the 219-residue chain is Small ribosomal subunit protein uS3 (219 aa).

The KH type-2 domain occupies 38–106; sequence IREYITARLK…RVHINILEVK (69 aa).

Belongs to the universal ribosomal protein uS3 family. Part of the 30S ribosomal subunit. Forms a tight complex with proteins S10 and S14.

Functionally, binds the lower part of the 30S subunit head. Binds mRNA in the 70S ribosome, positioning it for translation. This Bacillus cytotoxicus (strain DSM 22905 / CIP 110041 / 391-98 / NVH 391-98) protein is Small ribosomal subunit protein uS3.